The following is a 468-amino-acid chain: BTB and MATH domain-containing protein 45 (468 aa).

The region spanning 7–124 is the MATH domain; it reads VFELSHVFKD…DDSIIIEVLV (118 aa). BTB domains follow at residues 148 to 215 and 304 to 368; these read SDGI…IDDD and SDVI…IDDL.

This chain is BTB and MATH domain-containing protein 45 (bath-45), found in Caenorhabditis elegans.